A 440-amino-acid polypeptide reads, in one-letter code: C4-dicarboxylate transport protein (440 aa).

8 helical membrane passes run L8–A28, F40–I60, L74–V94, G147–K167, I187–V207, L221–L241, V288–L308, and A354–V374. The segment at D419–G440 is disordered.

This sequence belongs to the dicarboxylate/amino acid:cation symporter (DAACS) (TC 2.A.23) family.

The protein resides in the cell inner membrane. Its function is as follows. Responsible for the transport of dicarboxylates such as succinate, fumarate, and malate from the periplasm across the membrane. This is C4-dicarboxylate transport protein from Anaeromyxobacter dehalogenans (strain 2CP-C).